Consider the following 732-residue polypeptide: Polyribonucleotide nucleotidyltransferase (732 aa).

Positions 502 and 508 each coordinate Mg(2+). Residues 569-628 (PRLTSIQIPVDAIGMVIGKGGETIRSITEETGAEINIDDDGTVTIACSSPEGTKAAVETI) enclose the KH domain. One can recognise an S1 motif domain in the interval 638 to 712 (GTIYMGKVRD…GKTKFALSIK (75 aa)).

Belongs to the polyribonucleotide nucleotidyltransferase family. It depends on Mg(2+) as a cofactor.

Its subcellular location is the cytoplasm. The enzyme catalyses RNA(n+1) + phosphate = RNA(n) + a ribonucleoside 5'-diphosphate. Involved in mRNA degradation. Catalyzes the phosphorolysis of single-stranded polyribonucleotides processively in the 3'- to 5'-direction. The protein is Polyribonucleotide nucleotidyltransferase of Chlorobaculum parvum (strain DSM 263 / NCIMB 8327) (Chlorobium vibrioforme subsp. thiosulfatophilum).